Here is a 1163-residue protein sequence, read N- to C-terminus: E3 ubiquitin-protein ligase TRIM33 (1163 aa).

Residues 1–119 (MEVEASGTED…ASTSSSSSTP (119 aa)) form a disordered region. Positions 27-38 (TETKEAADEAKS) are enriched in basic and acidic residues. Positions 45-54 (TPTTSSDSSS) are enriched in low complexity. Positions 72–87 (DPPPPPPPPPPPPPST) are enriched in pro residues. Residues 88–99 (PADSTAAAASPA) show a composition bias toward low complexity. Residues 129–188 (CAVCKQSLQNRDCEPKLLPCLHSFCLKCIPQPDRKITMPVQGPHGQDTRIVNVMRCTVCH) form an RING-type zinc finger. Residues 215–268 (NSTQVCTSCEDNASAIGFCVECGEWLCKTCIEAHQRVKFTKDHKIRKKEEVSPE) form a B box-type 1; atypical zinc finger. Residues cysteine 220, cysteine 223, cysteine 244, histidine 257, cysteine 280, histidine 283, cysteine 303, and histidine 308 each coordinate Zn(2+). The segment at 275–316 (QRPVFCPVHKQEALKLFCETCDTLTCRDCQLLEHKEHRYQFL) adopts a B box-type 2 zinc-finger fold. Residues 345 to 369 (ASEVQKRLKEVAETHKKVEHEIKIA) adopt a coiled-coil conformation. Low complexity predominate over residues 524 to 533 (MQQAAIAQKH). 5 disordered regions span residues 524 to 555 (MQQA…QQQQ), 575 to 599 (QIQQ…QMIQ), 656 to 706 (LQRQ…VITP), 753 to 848 (TVGP…PLPI), and 867 to 918 (NVKS…KEDD). A compositionally biased stretch (basic residues) spans 534–548 (QQQHQHHQQQQHQHQ). The segment covering 580 to 590 (MRIASQMSQHP) has biased composition (polar residues). Composition is skewed to low complexity over residues 678-691 (SAAN…ASMA) and 753-797 (TVGP…SGTT). Over residues 821 to 830 (KTERTKDGRR) the composition is skewed to basic and acidic residues. Residues 870 to 889 (SEPQSDNLSSCTNPNSRATL) are compositionally biased toward polar residues. The PHD-type zinc-finger motif lies at 921-968 (EDWCAVCQNGGELLCCDHCPKVFHITCHIPTLKSSPSGDWMCTFCRNL). One can recognise a Bromo domain in the interval 991–1114 (AMSPEEQRRC…LYFEERLLEI (124 aa)). The interval 1128-1147 (TQIEAEKEDSDDSDDDIIQP) is disordered. Residues 1133–1144 (EKEDSDDSDDDI) show a composition bias toward acidic residues.

The protein localises to the nucleus. The catalysed reaction is S-ubiquitinyl-[E2 ubiquitin-conjugating enzyme]-L-cysteine + [acceptor protein]-L-lysine = [E2 ubiquitin-conjugating enzyme]-L-cysteine + N(6)-ubiquitinyl-[acceptor protein]-L-lysine.. It participates in protein modification; protein ubiquitination. May act as an E3 ubiquitin-protein ligase and a transcriptional repressor. Involved in the regulation of embryonic and adult hematopoiesis. Required for normal development and survival of both committed erythroid progenitor cells and posterior mesenchymal cells. This is E3 ubiquitin-protein ligase TRIM33 (trim33) from Danio rerio (Zebrafish).